The sequence spans 269 residues: Glutamate racemase (269 aa).

Substrate contacts are provided by residues 7–8 (DS) and 39–40 (YG). The active-site Proton donor/acceptor is the C70. Substrate is bound at residue 71-72 (NT). C194 serves as the catalytic Proton donor/acceptor. 195–196 (TH) lines the substrate pocket.

It belongs to the aspartate/glutamate racemases family.

The enzyme catalyses L-glutamate = D-glutamate. It participates in cell wall biogenesis; peptidoglycan biosynthesis. Its function is as follows. Provides the (R)-glutamate required for cell wall biosynthesis. In Roseobacter denitrificans (strain ATCC 33942 / OCh 114) (Erythrobacter sp. (strain OCh 114)), this protein is Glutamate racemase.